Consider the following 465-residue polypeptide: Uridine kinase-like protein 5 (465 aa).

The tract at residues 26–230 (LKQPFVIGVA…IVQHIRTKLC (205 aa)) is uridine kinase. Residues 240 to 465 (NIFIISSTFQ…SLSTNLKLRS (226 aa)) form a uracil phosphoribosyltransferase region. GTP is bound by residues Lys264, Arg273, and 307–310 (CKRL). 5-phospho-alpha-D-ribose 1-diphosphate contacts are provided by Arg317 and Arg342. Arg362 contacts GTP. 5-phospho-alpha-D-ribose 1-diphosphate-binding positions include Asp368, 373 to 376 (SGYS), and Glu439. Residue 438–440 (GEF) participates in uracil binding.

The protein in the N-terminal section; belongs to the uridine kinase family. It in the C-terminal section; belongs to the UPRTase family. Mg(2+) is required as a cofactor.

It catalyses the reaction UMP + diphosphate = 5-phospho-alpha-D-ribose 1-diphosphate + uracil. It carries out the reaction cytidine + ATP = CMP + ADP + H(+). The enzyme catalyses uridine + ATP = UMP + ADP + H(+). Its pathway is pyrimidine metabolism; UMP biosynthesis via salvage pathway; UMP from uracil: step 1/1. The protein operates within pyrimidine metabolism; CTP biosynthesis via salvage pathway; CTP from cytidine: step 1/3. It functions in the pathway pyrimidine metabolism; UMP biosynthesis via salvage pathway; UMP from uridine: step 1/1. With respect to regulation, allosterically activated by GTP. Functionally, involved in the pyrimidine salvage pathway. The protein is Uridine kinase-like protein 5 (UKL5) of Arabidopsis thaliana (Mouse-ear cress).